A 945-amino-acid chain; its full sequence is Leucine--tRNA ligase (945 aa).

Residues 43–53 (PYPNGAIHIGH) carry the 'HIGH' region motif. Positions 638-642 (KMSKS) match the 'KMSKS' region motif. Residue K641 participates in ATP binding.

The protein belongs to the class-I aminoacyl-tRNA synthetase family.

It is found in the cytoplasm. It carries out the reaction tRNA(Leu) + L-leucine + ATP = L-leucyl-tRNA(Leu) + AMP + diphosphate. The protein is Leucine--tRNA ligase of Pyrobaculum aerophilum (strain ATCC 51768 / DSM 7523 / JCM 9630 / CIP 104966 / NBRC 100827 / IM2).